The sequence spans 252 residues: Ribose-5-phosphate isomerase (252 aa).

It belongs to the ribose 5-phosphate isomerase family.

Its subcellular location is the cytoplasm. The enzyme catalyses aldehydo-D-ribose 5-phosphate = D-ribulose 5-phosphate. Its pathway is carbohydrate degradation; pentose phosphate pathway; D-ribose 5-phosphate from D-ribulose 5-phosphate (non-oxidative stage): step 1/1. This is Ribose-5-phosphate isomerase (RKI1) from Debaryomyces hansenii (strain ATCC 36239 / CBS 767 / BCRC 21394 / JCM 1990 / NBRC 0083 / IGC 2968) (Yeast).